A 76-amino-acid chain; its full sequence is Small ribosomal subunit protein bS18 (76 aa).

Belongs to the bacterial ribosomal protein bS18 family. Part of the 30S ribosomal subunit. Forms a tight heterodimer with protein bS6.

Its function is as follows. Binds as a heterodimer with protein bS6 to the central domain of the 16S rRNA, where it helps stabilize the platform of the 30S subunit. This Nitrosomonas europaea (strain ATCC 19718 / CIP 103999 / KCTC 2705 / NBRC 14298) protein is Small ribosomal subunit protein bS18.